A 570-amino-acid polypeptide reads, in one-letter code: 15-cis-phytoene desaturase, chloroplastic/chromoplastic (570 aa).

Residues 1 to 91 (MSIVGLVSVV…AQLSASFRSS (91 aa)) constitute a chloroplast and chromoplast transit peptide. FAD-binding positions include 104-120 (GAGL…ADAG), Ala108, 127-128 (ES), Lys135, 152-153 (HI), and Tyr158. Arg293 is a substrate binding site. Residue Asp524 participates in FAD binding. Residue Ala532 participates in substrate binding. Met534 contacts FAD.

It belongs to the carotenoid/retinoid oxidoreductase family. As to quaternary structure, homotetramer. Requires FAD as cofactor. In terms of tissue distribution, expressed more strongly in flowers than in leaves.

It localises to the plastid. The protein localises to the chloroplast. The protein resides in the chromoplast. It is found in the membrane. It catalyses the reaction 2 a plastoquinone + 15-cis-phytoene = 9,9',15-tri-cis-zeta-carotene + 2 a plastoquinol. The protein operates within carotenoid biosynthesis; lycopene biosynthesis. Functionally, converts phytoene into zeta-carotene via the intermediary of phytofluene by the symmetrical introduction of two double bonds at the C-11 and C-11' positions of phytoene with a concomitant isomerization of two neighboring double bonds at the C9 and C9' positions from trans to cis. The protein is 15-cis-phytoene desaturase, chloroplastic/chromoplastic (PDS1) of Narcissus pseudonarcissus (Daffodil).